The chain runs to 377 residues: MSTPALLVLADGSVFHGTSIGYEGSTSGEVVFNTSMTGYQEILTDPSYCKQIVTLTYPHIGNTGTNAEDEESRSVYAAGLIIRDLPLLHSNFRASESLHDYLVRNKTVAIADIDTRRLTTLLREKGAQGGAILTGADATIEKAQELIAAFGSMVGKDLAKEVSCTETYEWTEGEWALGKGFVTPDEQPYHVVAYDFGVKTNILRMLASRGCRLTVVPAQTSAEDVLALNPDGVFLSNGPGDPEPCTYAIKAVQKLIESGKPIFGICLGHQLISLAIGAKTLKMRFSHHGANHPVQDLDSGKVVITSQNHGFAVDADTLPANARITHKSLFDNTLQGIELTDKPVFCFQGHPEASPGPQDVGYLFDKFIGNMKAAKRA.

The interval 1 to 186 is CPSase; that stretch reads MSTPALLVLA…LGKGFVTPDE (186 aa). Residues Ser47, Gly238, and Gly240 each coordinate L-glutamine. Positions 190-377 constitute a Glutamine amidotransferase type-1 domain; sequence HVVAYDFGVK…IGNMKAAKRA (188 aa). Catalysis depends on Cys266, which acts as the Nucleophile. The L-glutamine site is built by Leu267, Gln270, Asn308, Gly310, and Phe311. Residues His350 and Glu352 contribute to the active site.

The protein belongs to the CarA family. As to quaternary structure, composed of two chains; the small (or glutamine) chain promotes the hydrolysis of glutamine to ammonia, which is used by the large (or ammonia) chain to synthesize carbamoyl phosphate. Tetramer of heterodimers (alpha,beta)4.

The catalysed reaction is hydrogencarbonate + L-glutamine + 2 ATP + H2O = carbamoyl phosphate + L-glutamate + 2 ADP + phosphate + 2 H(+). The enzyme catalyses L-glutamine + H2O = L-glutamate + NH4(+). It participates in amino-acid biosynthesis; L-arginine biosynthesis; carbamoyl phosphate from bicarbonate: step 1/1. It functions in the pathway pyrimidine metabolism; UMP biosynthesis via de novo pathway; (S)-dihydroorotate from bicarbonate: step 1/3. Functionally, small subunit of the glutamine-dependent carbamoyl phosphate synthetase (CPSase). CPSase catalyzes the formation of carbamoyl phosphate from the ammonia moiety of glutamine, carbonate, and phosphate donated by ATP, constituting the first step of 2 biosynthetic pathways, one leading to arginine and/or urea and the other to pyrimidine nucleotides. The small subunit (glutamine amidotransferase) binds and cleaves glutamine to supply the large subunit with the substrate ammonia. This Neisseria meningitidis serogroup B (strain ATCC BAA-335 / MC58) protein is Carbamoyl phosphate synthase small chain.